A 435-amino-acid chain; its full sequence is Methylenetetrahydrofolate--tRNA-(uracil-5-)-methyltransferase TrmFO (435 aa).

Gly10 to Gly15 is an FAD binding site.

It belongs to the MnmG family. TrmFO subfamily. As to quaternary structure, homodimer. FAD serves as cofactor.

The protein localises to the cytoplasm. The enzyme catalyses uridine(54) in tRNA + (6R)-5,10-methylene-5,6,7,8-tetrahydrofolate + NADH + H(+) = 5-methyluridine(54) in tRNA + (6S)-5,6,7,8-tetrahydrofolate + NAD(+). The catalysed reaction is uridine(54) in tRNA + (6R)-5,10-methylene-5,6,7,8-tetrahydrofolate + NADPH + H(+) = 5-methyluridine(54) in tRNA + (6S)-5,6,7,8-tetrahydrofolate + NADP(+). Catalyzes the folate-dependent formation of 5-methyl-uridine at position 54 (M-5-U54) in all tRNAs. The sequence is that of Methylenetetrahydrofolate--tRNA-(uracil-5-)-methyltransferase TrmFO from Bacillus subtilis (strain 168).